Here is a 277-residue protein sequence, read N- to C-terminus: Uridine-cytidine kinase 1 (277 aa).

Positions Met-1–Gly-30 are disordered. Position 30-38 (Gly-30–Thr-38) interacts with ATP. The active site involves Asp-65. Substrate-binding residues include Asp-87, Tyr-115, His-120, Arg-169, Arg-178, and Gln-186. ATP is bound at residue Asp-215. Positions Ser-247–His-277 are disordered. Position 251 is a phosphothreonine (Thr-251). At Ser-253 the chain carries Phosphoserine. The segment covering Ser-268–His-277 has biased composition (basic and acidic residues).

The protein belongs to the uridine kinase family. As to expression, ubiquitous.

It catalyses the reaction uridine + ATP = UMP + ADP + H(+). The enzyme catalyses cytidine + ATP = CMP + ADP + H(+). It functions in the pathway pyrimidine metabolism; CTP biosynthesis via salvage pathway; CTP from cytidine: step 1/3. The protein operates within pyrimidine metabolism; UMP biosynthesis via salvage pathway; UMP from uridine: step 1/1. Phosphorylates uridine and cytidine to uridine monophosphate and cytidine monophosphate. Does not phosphorylate deoxyribonucleosides or purine ribonucleosides. Can use ATP or GTP as a phosphate donor. Can also phosphorylate cytidine and uridine nucleoside analogs such as 6-azauridine, 5-fluorouridine, 4-thiouridine, 5-bromouridine, N(4)-acetylcytidine, N(4)-benzoylcytidine, 5-fluorocytidine, 2-thiocytidine, 5-methylcytidine, and N(4)-anisoylcytidine. In Homo sapiens (Human), this protein is Uridine-cytidine kinase 1 (UCK1).